The sequence spans 469 residues: Sulfate adenylyltransferase subunit 1 (469 aa).

Positions 22-236 constitute a tr-type G domain; the sequence is KDMLRVLTCG…LLNTVSVEQD (215 aa). The tract at residues 31-38 is G1; it reads GSVDDGKS. A GTP-binding site is contributed by 31–38; that stretch reads GSVDDGKS. The tract at residues 89-93 is G2; it reads GITID. A G3 region spans residues 110 to 113; that stretch reads DTPG. GTP contacts are provided by residues 110-114 and 165-168; these read DTPGH and NKMD. Residues 165–168 are G4; the sequence is NKMD. A G5 region spans residues 202 to 204; that stretch reads SAL.

This sequence belongs to the TRAFAC class translation factor GTPase superfamily. Classic translation factor GTPase family. CysN/NodQ subfamily. As to quaternary structure, heterodimer composed of CysD, the smaller subunit, and CysN.

The catalysed reaction is sulfate + ATP + H(+) = adenosine 5'-phosphosulfate + diphosphate. It participates in sulfur metabolism; hydrogen sulfide biosynthesis; sulfite from sulfate: step 1/3. Functionally, with CysD forms the ATP sulfurylase (ATPS) that catalyzes the adenylation of sulfate producing adenosine 5'-phosphosulfate (APS) and diphosphate, the first enzymatic step in sulfur assimilation pathway. APS synthesis involves the formation of a high-energy phosphoric-sulfuric acid anhydride bond driven by GTP hydrolysis by CysN coupled to ATP hydrolysis by CysD. This is Sulfate adenylyltransferase subunit 1 from Shewanella woodyi (strain ATCC 51908 / MS32).